A 406-amino-acid polypeptide reads, in one-letter code: COP9 signalosome complex subunit 4 (406 aa).

Ala-2 is subject to N-acetylalanine. Residue Lys-25 is modified to N6-acetyllysine. Residues 197-366 (YRRKFIEAAQ…GIVHFETREA (170 aa)) enclose the PCI domain.

Belongs to the CSN4 family. Component of the CSN complex, composed of COPS1/GPS1, COPS2, COPS3, COPS4, COPS5, COPS6, COPS7 (COPS7A or COPS7B), COPS8 and COPS9. In the complex, it probably interacts directly with COPS1, COPS2, COPS3, COPS5, COPS6, COPS7 (COPS7A or COPS7B) and COPS8. Interacts with TOR1A; the interaction is direct and associates TOR1A and SNAPIN with the CSN complex. Interacts with STON2; controls STON2 neddylation levels. Interacts with ERCC6.

The protein resides in the cytoplasm. Its subcellular location is the nucleus. It localises to the cytoplasmic vesicle. It is found in the secretory vesicle. The protein localises to the synaptic vesicle. Component of the COP9 signalosome complex (CSN), a complex involved in various cellular and developmental processes. The CSN complex is an essential regulator of the ubiquitin (Ubl) conjugation pathway by mediating the deneddylation of the cullin subunits of SCF-type E3 ligase complexes, leading to decrease the Ubl ligase activity of SCF-type complexes such as SCF, CSA or DDB2. Also involved in the deneddylation of non-cullin subunits such as STON2. The complex is also involved in phosphorylation of p53/TP53, c-jun/JUN, IkappaBalpha/NFKBIA, ITPK1, IRF8/ICSBP and SNAPIN, possibly via its association with CK2 and PKD kinases. CSN-dependent phosphorylation of TP53 and JUN promotes and protects degradation by the Ubl system, respectively. In Rattus norvegicus (Rat), this protein is COP9 signalosome complex subunit 4 (Cops4).